The chain runs to 221 residues: UPF0502 protein PA14_19450 (221 aa).

It belongs to the UPF0502 family.

This chain is UPF0502 protein PA14_19450, found in Pseudomonas aeruginosa (strain UCBPP-PA14).